The chain runs to 103 residues: Histone H4.1 (103 aa).

Positions Met1–Gly14 are enriched in gly residues. Positions Met1–Arg20 are disordered. Residue Lys6 is modified to N6-acetyl-N6-methyllysine; alternate. 3 positions are modified to N6-methyllysine; alternate: Lys6, Lys9, and Lys13. Lys13 carries the N6-acetyl-N6-methyllysine; alternate modification. A DNA-binding region spans residues Lys17–Lys21. N6-glutaryllysine is present on Lys92.

It belongs to the histone H4 family. As to quaternary structure, the nucleosome is a histone octamer containing two molecules each of H2A, H2B, H3 and H4 assembled in one H3-H4 heterotetramer and two H2A-H2B heterodimers. The octamer wraps approximately 147 bp of DNA. In terms of processing, glutarylation at Lys-92 (H4K91glu) destabilizes nucleosomes by promoting dissociation of the H2A-H2B dimers from nucleosomes.

The protein resides in the nucleus. Its subcellular location is the chromosome. Its function is as follows. Core component of nucleosome. Nucleosomes wrap and compact DNA into chromatin, limiting DNA accessibility to the cellular machineries which require DNA as a template. Histones thereby play a central role in transcription regulation, DNA repair, DNA replication and chromosomal stability. DNA accessibility is regulated via a complex set of post-translational modifications of histones, also called histone code, and nucleosome remodeling. This chain is Histone H4.1 (hhfA), found in Emericella nidulans (strain FGSC A4 / ATCC 38163 / CBS 112.46 / NRRL 194 / M139) (Aspergillus nidulans).